Here is a 141-residue protein sequence, read N- to C-terminus: Transmembrane protein 216 (141 aa).

The next 4 helical transmembrane spans lie at 15–35, 49–69, 82–102, and 115–135; these read ILFF…LFIF, LVLD…RLFF, LGIS…YLLL, and SILL…LTAF.

Part of the tectonic-like complex (also named B9 complex). Interacts with TMEM107.

It is found in the membrane. Its subcellular location is the cytoplasm. It localises to the cytoskeleton. The protein localises to the cilium basal body. Functionally, part of the tectonic-like complex which is required for tissue-specific ciliogenesis and may regulate ciliary membrane composition. This chain is Transmembrane protein 216 (TMEM216), found in Bos taurus (Bovine).